A 282-amino-acid chain; its full sequence is DNA-binding transcriptional repressor YiaJ (282 aa).

The segment covering 1–20 has biased composition (basic and acidic residues); sequence MGKEVMGKKENEMAQEKERP. A disordered region spans residues 1–21; that stretch reads MGKEVMGKKENEMAQEKERPA. Residues 23-85 enclose the HTH iclR-type domain; sequence SQSLFRGLML…PAAGSYRLTT (63 aa). Positions 45–64 form a DNA-binding region, H-T-H motif; it reads LAHLSELAGLNKSTVHRLLQ. Residues 100–272 enclose the IclR-ED domain; it reads IIHIAAPHLE…AQAISNELGF (173 aa).

Functionally, negatively controls the transcription of the yiaKLMNOPQRS operon, which may be involved in the utilization of 2,3-diketo-L-gulonate. This is DNA-binding transcriptional repressor YiaJ (yiaJ) from Escherichia coli (strain K12).